We begin with the raw amino-acid sequence, 99 residues long: MALTLTDVTRIAHLARLEMADADAERTLTQLNEFFGLVEQMQAVDTTGIAPLAHPIEQILEVAQRLREDAVTEHVNRDDNQRPAPAVQDGLYLVPKVIE.

It belongs to the GatC family. Heterotrimer of A, B and C subunits.

The catalysed reaction is L-glutamyl-tRNA(Gln) + L-glutamine + ATP + H2O = L-glutaminyl-tRNA(Gln) + L-glutamate + ADP + phosphate + H(+). The enzyme catalyses L-aspartyl-tRNA(Asn) + L-glutamine + ATP + H2O = L-asparaginyl-tRNA(Asn) + L-glutamate + ADP + phosphate + 2 H(+). In terms of biological role, allows the formation of correctly charged Asn-tRNA(Asn) or Gln-tRNA(Gln) through the transamidation of misacylated Asp-tRNA(Asn) or Glu-tRNA(Gln) in organisms which lack either or both of asparaginyl-tRNA or glutaminyl-tRNA synthetases. The reaction takes place in the presence of glutamine and ATP through an activated phospho-Asp-tRNA(Asn) or phospho-Glu-tRNA(Gln). The sequence is that of Aspartyl/glutamyl-tRNA(Asn/Gln) amidotransferase subunit C from Burkholderia mallei (strain NCTC 10247).